Here is a 342-residue protein sequence, read N- to C-terminus: Predicted GPI-anchored protein 54 (342 aa).

The first 16 residues, 1–16 (MRANYLLLLAATAVQA), serve as a signal peptide directing secretion. N-linked (GlcNAc...) asparagine glycans are attached at residues Asn-25, Asn-105, and Asn-151. The GPI-anchor amidated glycine moiety is linked to residue Gly-314. A propeptide spans 315 to 342 (ASQSHPISSYSNYTISDYAPPISSYYSL) (removed in mature form). The N-linked (GlcNAc...) asparagine glycan is linked to Asn-326.

The protein localises to the cell membrane. This Candida albicans (strain SC5314 / ATCC MYA-2876) (Yeast) protein is Predicted GPI-anchored protein 54 (PGA54).